Consider the following 85-residue polypeptide: Large ribosomal subunit protein bL27 (85 aa).

Positions 1–20 are disordered; sequence MAHKKAGGSTRNGRDSEAKR.

The protein belongs to the bacterial ribosomal protein bL27 family.

The polypeptide is Large ribosomal subunit protein bL27 (Cronobacter sakazakii (strain ATCC BAA-894) (Enterobacter sakazakii)).